The sequence spans 450 residues: Tubulin alpha-2 chain (450 aa).

GTP contacts are provided by glutamine 11, glutamate 71, glycine 144, threonine 145, threonine 179, asparagine 206, and asparagine 228. Glutamate 71 lines the Mg(2+) pocket. Glutamate 254 is a catalytic residue. A Phosphothreonine modification is found at threonine 349. The tract at residues 430 to 450 (KDYEEVGAEGGDDEDDEGEEY) is disordered. Over residues 431 to 450 (DYEEVGAEGGDDEDDEGEEY) the composition is skewed to acidic residues.

It belongs to the tubulin family. Dimer of alpha and beta chains. A typical microtubule is a hollow water-filled tube with an outer diameter of 25 nm and an inner diameter of 15 nM. Alpha-beta heterodimers associate head-to-tail to form protofilaments running lengthwise along the microtubule wall with the beta-tubulin subunit facing the microtubule plus end conferring a structural polarity. Microtubules usually have 13 protofilaments but different protofilament numbers can be found in some organisms and specialized cells. It depends on Mg(2+) as a cofactor. In terms of processing, undergoes a tyrosination/detyrosination cycle, the cyclic removal and re-addition of a C-terminal tyrosine residue by the enzymes tubulin tyrosine carboxypeptidase (TTCP) and tubulin tyrosine ligase (TTL), respectively. Acetylation of alpha chains at Lys-40 stabilizes microtubules and affects affinity and processivity of microtubule motors. This modification has a role in multiple cellular functions, ranging from cell motility, cell cycle progression or cell differentiation to intracellular trafficking and signaling.

Its subcellular location is the cytoplasm. The protein localises to the cytoskeleton. It catalyses the reaction GTP + H2O = GDP + phosphate + H(+). Tubulin is the major constituent of microtubules, a cylinder consisting of laterally associated linear protofilaments composed of alpha- and beta-tubulin heterodimers. Microtubules grow by the addition of GTP-tubulin dimers to the microtubule end, where a stabilizing cap forms. Below the cap, tubulin dimers are in GDP-bound state, owing to GTPase activity of alpha-tubulin. The protein is Tubulin alpha-2 chain (TUBA2) of Arabidopsis thaliana (Mouse-ear cress).